The chain runs to 380 residues: Bifunctional dihydropteroate synthase/dihydropteroate reductase (380 aa).

The tract at residues 1-104 is dihydropteroate reductase; sequence MIVKRLNPDA…SQPFGLKHLA (104 aa). The dihydropteroate synthase stretch occupies residues 105–380; sequence QELKSHLKAP…KVFKSLEETD (276 aa). In terms of domain architecture, Pterin-binding spans 119-371; that stretch reads PQIMAVLNLT…DIDEHIDLIK (253 aa). Asn-126 contributes to the Mg(2+) binding site. (7,8-dihydropterin-6-yl)methyl diphosphate-binding positions include Asp-202, Asn-221, Asp-289, Lys-325, and 359–361; that span reads RVH.

The protein in the C-terminal section; belongs to the DHPS family. FAD serves as cofactor. It depends on FMN as a cofactor. Mg(2+) is required as a cofactor.

It carries out the reaction (7,8-dihydropterin-6-yl)methyl diphosphate + 4-aminobenzoate = 7,8-dihydropteroate + diphosphate. It catalyses the reaction (6S)-5,6,7,8-tetrahydropteroate + NAD(+) = 7,8-dihydropteroate + NADH + H(+). It participates in cofactor biosynthesis; tetrahydrofolate biosynthesis; 7,8-dihydrofolate from 2-amino-4-hydroxy-6-hydroxymethyl-7,8-dihydropteridine diphosphate and 4-aminobenzoate: step 1/2. Bifunctional enzyme that catalyzes the formation of dihydropteroate, the immediate precursor of folic acid and the reduction of dihydropteroate to tetrahydropteroate. The chain is Bifunctional dihydropteroate synthase/dihydropteroate reductase from Helicobacter pylori (strain ATCC 700392 / 26695) (Campylobacter pylori).